The chain runs to 23 residues: Pseudin-4 (23 aa).

As to expression, expressed by the skin glands.

The protein resides in the secreted. In terms of biological role, possesses antifungal activity against C.albicans and is also active against E.coli and S.aureus. This Pseudis paradoxa (Paradoxical frog) protein is Pseudin-4.